A 128-amino-acid chain; its full sequence is Sulfurtransferase TusD (128 aa).

Catalysis depends on cysteine 78, which acts as the Cysteine persulfide intermediate.

This sequence belongs to the DsrE/TusD family. As to quaternary structure, heterohexamer, formed by a dimer of trimers. The hexameric TusBCD complex contains 2 copies each of TusB, TusC and TusD. The TusBCD complex interacts with TusE.

The protein localises to the cytoplasm. Part of a sulfur-relay system required for 2-thiolation of 5-methylaminomethyl-2-thiouridine (mnm(5)s(2)U) at tRNA wobble positions. Accepts sulfur from TusA and transfers it in turn to TusE. In Klebsiella pneumoniae (strain 342), this protein is Sulfurtransferase TusD.